The following is a 341-amino-acid chain: Guanine nucleotide-binding protein subunit beta (341 aa).

WD repeat units follow at residues 54–93, 96–135, 142–180, 183–222, 225–264, 269–308, and 311–341; these read GHLA…KVHA, LRSS…GNVR, GHTG…QTTA, GHTG…CKQT, GHES…EIGM, NIIC…RAGV, and GHDN…RIWN.

Belongs to the WD repeat G protein beta family. As to quaternary structure, g proteins are composed of 3 units, alpha, beta and gamma. The G protein beta1-gamma2 dimer interacts with calmodulin. Abundantly expressed in gills, gonad and mantle and at lower levels in digestion gland. Not detected in muscle.

The protein localises to the cytoplasm. Its function is as follows. Guanine nucleotide-binding proteins (G proteins) are involved as a modulator or transducer in various transmembrane signaling systems. The beta and gamma chains are required for the GTPase activity, for replacement of GDP by GTP, and for G protein-effector interaction. This chain is Guanine nucleotide-binding protein subunit beta, found in Pinctada fucata (Akoya pearl oyster).